Here is a 308-residue protein sequence, read N- to C-terminus: Aspartate carbamoyltransferase catalytic subunit (308 aa).

Residues Arg-58 and Thr-59 each contribute to the carbamoyl phosphate site. Position 86 (Lys-86) interacts with L-aspartate. Carbamoyl phosphate-binding residues include Arg-108, His-136, and Gln-139. L-aspartate-binding residues include Arg-169 and Arg-227. 2 residues coordinate carbamoyl phosphate: Gly-268 and Pro-269.

It belongs to the aspartate/ornithine carbamoyltransferase superfamily. ATCase family. As to quaternary structure, heterododecamer (2C3:3R2) of six catalytic PyrB chains organized as two trimers (C3), and six regulatory PyrI chains organized as three dimers (R2).

It carries out the reaction carbamoyl phosphate + L-aspartate = N-carbamoyl-L-aspartate + phosphate + H(+). Its pathway is pyrimidine metabolism; UMP biosynthesis via de novo pathway; (S)-dihydroorotate from bicarbonate: step 2/3. In terms of biological role, catalyzes the condensation of carbamoyl phosphate and aspartate to form carbamoyl aspartate and inorganic phosphate, the committed step in the de novo pyrimidine nucleotide biosynthesis pathway. The polypeptide is Aspartate carbamoyltransferase catalytic subunit (Chloroflexus aurantiacus (strain ATCC 29366 / DSM 635 / J-10-fl)).